The sequence spans 314 residues: Secreted frizzled-related protein 1 (314 aa).

Residues 1–31 (MGVGRSARGRGGAASGVLLALAAALLAAGSA) form the signal peptide. Residues 53–169 (TKPPQCVDIP…FPEGDVCIAM (117 aa)) form the FZ domain. 5 disulfide bridges follow: C58/C121, C68/C114, C105/C140, C129/C166, and C133/C157. N173 carries N-linked (GlcNAc...) asparagine glycosylation. Cystine bridges form between C186/C256, C189/C258, and C203/C306. Positions 186 to 306 (CPPCDNELKS…FMKRMKNHEC (121 aa)) constitute an NTR domain.

Belongs to the secreted frizzled-related protein (sFRP) family. As to quaternary structure, interacts with WNT8, WNT1, WNT2, WNT4 and FRZD6. Interacts with MYOC. As to expression, highly expressed in kidney and embryonic heart. Also highly expressed in the eye, where it is principally localized to the ciliary body and the lens epithelium. Weaker expression in heart, lung and brain. In the brain, is expressed exclusively in the choroid plexus.

The protein resides in the secreted. Soluble frizzled-related proteins (sFRPS) function as modulators of Wnt signaling through direct interaction with Wnts. They have a role in regulating cell growth and differentiation in specific cell types. SFRP1 decreases intracellular beta-catenin levels. Has antiproliferative effects on vascular cells, in vitro and in vivo, and can induce, in vivo, an angiogenic response. In vascular cell cycle, delays the G1 phase and entry into the S phase. In kidney development, inhibits tubule formation and bud growth in metanephroi. Inhibits WNT1/WNT4-mediated TCF-dependent transcription. In Mus musculus (Mouse), this protein is Secreted frizzled-related protein 1.